Reading from the N-terminus, the 662-residue chain is Polyunsaturated fatty acid (12S)/(13S)-lipoxygenase, epidermal-type (662 aa).

Residues 2–114 (GKYKILVVTG…TIYLPEGTAL (113 aa)) enclose the PLAT domain. Positions 114 to 662 (LKVNDDTKNL…PSMVENSVTI (549 aa)) constitute a Lipoxygenase domain. Fe cation is bound by residues His-360, His-365, His-540, His-544, and Ile-662.

The protein belongs to the lipoxygenase family. Requires Fe cation as cofactor.

Its subcellular location is the cytoplasm. It catalyses the reaction (5Z,8Z,11Z,14Z)-eicosatetraenoate + O2 = (12S)-hydroperoxy-(5Z,8Z,10E,14Z)-eicosatetraenoate. The catalysed reaction is 1-O-methyl-(9Z,12Z)-octadecadienoate + O2 = 1-O-methyl-(13S)-hydroperoxy-(9Z,11E)-octadecadienoate. It carries out the reaction (8Z,11Z,14Z)-eicosatrienoate + O2 = (12S)-hydroperoxy-(8Z,10E,14Z)-eicosatrienoate. The enzyme catalyses (5Z,8Z,11Z)-eicosatrienoate + O2 = (12S)-hydroperoxy-(5Z,8Z,10E)-eicosatrienoate. It catalyses the reaction 1-O-methyl-(5Z,8Z,11Z,14Z)-eicosatetraenoate + O2 = 1-O-methyl-(12S)-hydroperoxy-(5Z,8Z,10E,14Z)-eicosatetraenoate. The catalysed reaction is (9Z,12Z)-octadecadienoate + O2 = (13S)-hydroperoxy-(9Z,11E)-octadecadienoate. It carries out the reaction (4Z,7Z,10Z,13Z,16Z,19Z)-docosahexaenoate + O2 = (14S)-hydroperoxy-(4Z,7Z,10Z,12E,16Z,19Z)-docosahexaenoate. The protein operates within lipid metabolism; hydroperoxy eicosatetraenoic acid biosynthesis. With respect to regulation, arachidonate 12-lipoxygenase activity is decreased when the pH decreases from 7.4 to 6.0. In terms of biological role, catalyzes the regio and stereo-specific incorporation of a single molecule of dioxygen into free and esterified polyunsaturated fatty acids generating lipid hydroperoxides that can be further reduced to the corresponding hydroxy species. Shows increasing catalytic activity within the series arachidonic acid &lt; 5,8,11-eicosatrienoic acid &lt; linoleic acid &lt; 8,11,14-eicosatrienoic acid. The polypeptide is Polyunsaturated fatty acid (12S)/(13S)-lipoxygenase, epidermal-type (Rattus norvegicus (Rat)).